A 287-amino-acid polypeptide reads, in one-letter code: Bifunctional protein FolD (287 aa).

NADP(+)-binding positions include 166-168 and isoleucine 232; that span reads GAS.

This sequence belongs to the tetrahydrofolate dehydrogenase/cyclohydrolase family. Homodimer.

The catalysed reaction is (6R)-5,10-methylene-5,6,7,8-tetrahydrofolate + NADP(+) = (6R)-5,10-methenyltetrahydrofolate + NADPH. It carries out the reaction (6R)-5,10-methenyltetrahydrofolate + H2O = (6R)-10-formyltetrahydrofolate + H(+). It functions in the pathway one-carbon metabolism; tetrahydrofolate interconversion. Its function is as follows. Catalyzes the oxidation of 5,10-methylenetetrahydrofolate to 5,10-methenyltetrahydrofolate and then the hydrolysis of 5,10-methenyltetrahydrofolate to 10-formyltetrahydrofolate. The polypeptide is Bifunctional protein FolD (Aeromonas hydrophila subsp. hydrophila (strain ATCC 7966 / DSM 30187 / BCRC 13018 / CCUG 14551 / JCM 1027 / KCTC 2358 / NCIMB 9240 / NCTC 8049)).